The primary structure comprises 587 residues: Probable pectinesterase/pectinesterase inhibitor 61 (587 aa).

Positions 1-23 are disordered; sequence MGYDRLGPSGPSNPNQKDPATSL. The segment covering 10 to 19 has biased composition (polar residues); that stretch reads GPSNPNQKDP. Residues 35-55 form a helical membrane-spanning segment; sequence ILFTLAVLVVGVVCFGIFAGI. A pectinesterase inhibitor 61 region spans residues 69-223; sequence RKPTQAISRT…SEMVSNCLAI (155 aa). The tract at residues 273–571 is pectinesterase 61; sequence DITVSKDGSG…FTVAQFISGS (299 aa). 2 residues coordinate substrate: Thr-349 and Gln-379. Asp-402 functions as the Proton donor; for pectinesterase activity in the catalytic mechanism. Residues Cys-416 and Cys-436 are joined by a disulfide bond. Asp-423 serves as the catalytic Nucleophile; for pectinesterase activity. Positions 491 and 493 each coordinate substrate.

This sequence in the N-terminal section; belongs to the PMEI family. The protein in the C-terminal section; belongs to the pectinesterase family. As to expression, expressed in siliques, floral stems and rosettes leaves.

It is found in the membrane. The enzyme catalyses [(1-&gt;4)-alpha-D-galacturonosyl methyl ester](n) + n H2O = [(1-&gt;4)-alpha-D-galacturonosyl](n) + n methanol + n H(+). The protein operates within glycan metabolism; pectin degradation; 2-dehydro-3-deoxy-D-gluconate from pectin: step 1/5. Acts in the modification of cell walls via demethylesterification of cell wall pectin. The chain is Probable pectinesterase/pectinesterase inhibitor 61 (PME61) from Arabidopsis thaliana (Mouse-ear cress).